Reading from the N-terminus, the 398-residue chain is MGHDSFCYLIVLRCALRCGIIALMQICALQKKERRSKMESSDRSSQAKAFDETKTGVKGLVASGIKEIPAMFHTPPDTLTSLKQTAPPSQQLTIPTVDLKGGSMDLISRRSVVEKIGDAAERWGFFQVVNHGISVEVMERMKEGIRRFHEQDPEVKKRFYSRDHTRDVLYYSNIDLHTCNKAANWRDTLACYMAPDPPKLQDLPAVCGEIMMEYSKQLMTLGEFLFELLSEALGLNPNHLKDMGCAKSHIMFGQYYPPCPQPDLTLGISKHTDFSFITILLQDNIGGLQVIHDQCWVDVSPVPGALVINIGDLLQLISNDKFISAEHRVIANGSSEPRISMPCFVSTFMKPNPRIYGPIKELLSEQNPAKYRDLTITEFSNTFRSQTISHPALHHFRI.

Residues 247–347 form the Fe2OG dioxygenase domain; it reads KSHIMFGQYY…RISMPCFVST (101 aa). Residues histidine 271, aspartate 273, and histidine 327 each contribute to the Fe cation site. Residue arginine 338 participates in 2-oxoglutarate binding.

Belongs to the iron/ascorbate-dependent oxidoreductase family. Requires Fe(2+) as cofactor. Expressed in etiolated seedlings, leaves, stems and flowers.

In Arabidopsis thaliana (Mouse-ear cress), this protein is 1-aminocyclopropane-1-carboxylate oxidase homolog 5 (2A6).